The primary structure comprises 465 residues: 3-isopropylmalate dehydratase large subunit (465 aa).

The [4Fe-4S] cluster site is built by Cys347, Cys407, and Cys410.

The protein belongs to the aconitase/IPM isomerase family. LeuC type 1 subfamily. As to quaternary structure, heterodimer of LeuC and LeuD. [4Fe-4S] cluster serves as cofactor.

The enzyme catalyses (2R,3S)-3-isopropylmalate = (2S)-2-isopropylmalate. It functions in the pathway amino-acid biosynthesis; L-leucine biosynthesis; L-leucine from 3-methyl-2-oxobutanoate: step 2/4. Functionally, catalyzes the isomerization between 2-isopropylmalate and 3-isopropylmalate, via the formation of 2-isopropylmaleate. The protein is 3-isopropylmalate dehydratase large subunit of Aeromonas hydrophila subsp. hydrophila (strain ATCC 7966 / DSM 30187 / BCRC 13018 / CCUG 14551 / JCM 1027 / KCTC 2358 / NCIMB 9240 / NCTC 8049).